The primary structure comprises 201 residues: UPF0301 protein RHA1_ro03630 (201 aa).

It belongs to the UPF0301 (AlgH) family.

This is UPF0301 protein RHA1_ro03630 from Rhodococcus jostii (strain RHA1).